The sequence spans 124 residues: Small ribosomal subunit protein uS13 (124 aa).

The interval 95 to 124 (GLPVRGQRTRHNARTRKGPRKTVGAKKGKR) is disordered. A compositionally biased stretch (basic residues) spans 101–124 (QRTRHNARTRKGPRKTVGAKKGKR).

This sequence belongs to the universal ribosomal protein uS13 family. As to quaternary structure, part of the 30S ribosomal subunit. Forms a loose heterodimer with protein S19. Forms two bridges to the 50S subunit in the 70S ribosome.

In terms of biological role, located at the top of the head of the 30S subunit, it contacts several helices of the 16S rRNA. In the 70S ribosome it contacts the 23S rRNA (bridge B1a) and protein L5 of the 50S subunit (bridge B1b), connecting the 2 subunits; these bridges are implicated in subunit movement. Contacts the tRNAs in the A and P-sites. This is Small ribosomal subunit protein uS13 from Coprothermobacter proteolyticus (strain ATCC 35245 / DSM 5265 / OCM 4 / BT).